Consider the following 239-residue polypeptide: Claudin-14 (239 aa).

At 1–7 the chain is on the cytoplasmic side; the sequence is MASTAVQ. The chain crosses the membrane as a helical span at residues 8 to 28; the sequence is LLGFLLSFLGMVGTLITTILP. The Extracellular segment spans residues 29–81; it reads HWRRTAHVGTNILTAVSYLKGLWMECVWHSTGIYQCQIYRSLLALPRDLQAAR. The chain crosses the membrane as a helical span at residues 82 to 102; the sequence is ALMVISCLLSGMACACAVVGM. At 103-115 the chain is on the cytoplasmic side; it reads KCTRCAKGTPAKT. Residues 116–136 traverse the membrane as a helical segment; it reads TFAVLGGALFLLAGLLCMVAV. Topologically, residues 137 to 162 are extracellular; the sequence is SWTTNDVVQNFYNPLLPSGMKFEIGQ. Residues 163 to 183 traverse the membrane as a helical segment; it reads ALYLGFISSSLSLIGGTLLCL. Residues 184–239 are Cytoplasmic-facing; it reads SCQDEAPYRPYPPQSRAGATTTATAPAYRPPAAYKDNRAPSVTSAAHSGYRLNDYV.

The protein belongs to the claudin family. Expressed in all sensory epithelia of the inner ear vestibular organs, as well as in liver and kidney.

It is found in the cell junction. It localises to the tight junction. The protein localises to the cell membrane. In terms of biological role, plays a major role in tight junction-specific obliteration of the intercellular space, through calcium-independent cell-adhesion activity. The chain is Claudin-14 (Cldn14) from Mus musculus (Mouse).